A 322-amino-acid chain; its full sequence is Malate dehydrogenase (322 aa).

Residues 10–15 (GSGQIG) and D34 each bind NAD(+). R83 and R89 together coordinate substrate. NAD(+)-binding positions include N96 and 119 to 121 (ITN). Residues N121 and R152 each coordinate substrate. H176 (proton acceptor) is an active-site residue.

It belongs to the LDH/MDH superfamily. MDH type 3 family.

The enzyme catalyses (S)-malate + NAD(+) = oxaloacetate + NADH + H(+). Its function is as follows. Catalyzes the reversible oxidation of malate to oxaloacetate. The protein is Malate dehydrogenase of Rhodopseudomonas palustris (strain HaA2).